Here is a 232-residue protein sequence, read N- to C-terminus: MGKVAKRIKNIRKDINFNELYALKDAVSMVKERAIAKFDETIEISMNLGVDPRHADQMVRGVVHLPNGTGRNVRVAVFARGDKAEEAKTAGADIVGAEDLFESINGGAIDFDRCIATPDMMPLVGRLGKILGPRNLMPNPKVGTVTLDVANAVKASKGGAVEFRVEKAGIVHAGIGKASFGVEKIVENIKAFASAVIKAKPQGAKGEYIKRVAVSSTMGVGIKVDPATVRSE.

This sequence belongs to the universal ribosomal protein uL1 family. In terms of assembly, part of the 50S ribosomal subunit.

Functionally, binds directly to 23S rRNA. The L1 stalk is quite mobile in the ribosome, and is involved in E site tRNA release. Its function is as follows. Protein L1 is also a translational repressor protein, it controls the translation of the L11 operon by binding to its mRNA. This is Large ribosomal subunit protein uL1 from Bartonella henselae (strain ATCC 49882 / DSM 28221 / CCUG 30454 / Houston 1) (Rochalimaea henselae).